We begin with the raw amino-acid sequence, 263 residues long: uncharacterized protein (263 aa).

The first 22 residues, 1-22 (MEYLKRLALLISVIILTIFIMG), serve as a signal peptide directing secretion. Residue cysteine 23 is the site of N-palmitoyl cysteine attachment. Residue cysteine 23 is the site of S-diacylglycerol cysteine attachment.

This sequence belongs to the staphylococcal tandem lipoprotein family.

It is found in the cell membrane. This is an uncharacterized protein from Staphylococcus aureus (strain USA300).